The sequence spans 217 residues: Uracil-DNA glycosylase (217 aa).

Asp-62 functions as the Proton acceptor in the catalytic mechanism.

This sequence belongs to the uracil-DNA glycosylase (UDG) superfamily. UNG family.

Its subcellular location is the cytoplasm. The enzyme catalyses Hydrolyzes single-stranded DNA or mismatched double-stranded DNA and polynucleotides, releasing free uracil.. Its function is as follows. Excises uracil residues from the DNA which can arise as a result of misincorporation of dUMP residues by DNA polymerase or due to deamination of cytosine. This is Uracil-DNA glycosylase from Streptococcus pneumoniae serotype 19F (strain G54).